The chain runs to 136 residues: Probable glycine cleavage system H protein 3 (136 aa).

The region spanning 28–109 (MVTVGITSLG…PYDAWIVKIK (82 aa)) is the Lipoyl-binding domain. The residue at position 69 (lysine 69) is an N6-lipoyllysine.

Belongs to the GcvH family. As to quaternary structure, the glycine cleavage system is composed of four proteins: P, T, L and H. (R)-lipoate is required as a cofactor.

In terms of biological role, the glycine cleavage system catalyzes the degradation of glycine. The H protein shuttles the methylamine group of glycine from the P protein to the T protein. This chain is Probable glycine cleavage system H protein 3, found in Sulfurisphaera tokodaii (strain DSM 16993 / JCM 10545 / NBRC 100140 / 7) (Sulfolobus tokodaii).